A 320-amino-acid polypeptide reads, in one-letter code: Cytochrome f (320 aa).

The N-terminal stretch at 1 to 35 is a signal peptide; that stretch reads MQMRNTFSWIKEEIIRFIAVSLIIYIITRAPISNA. The heme site is built by Y36, C56, C59, and H60. Residues 286–306 traverse the membrane as a helical segment; it reads VQGLLLFLASIILAQIFLVLK.

The protein belongs to the cytochrome f family. In terms of assembly, the 4 large subunits of the cytochrome b6-f complex are cytochrome b6, subunit IV (17 kDa polypeptide, petD), cytochrome f and the Rieske protein, while the 4 small subunits are PetG, PetL, PetM and PetN. The complex functions as a dimer. Heme serves as cofactor.

It is found in the plastid. The protein resides in the chloroplast thylakoid membrane. Component of the cytochrome b6-f complex, which mediates electron transfer between photosystem II (PSII) and photosystem I (PSI), cyclic electron flow around PSI, and state transitions. This Morus indica (Mulberry) protein is Cytochrome f.